Reading from the N-terminus, the 289-residue chain is MAWRNRRGALRAILSGSHCTRPASVYDPISMRIADDLGFEVGMFGGSVASLAILGDPDIALITLTELAEQVRRMSRAAALPVLVDADHGYGNALNVRRTVQELEAAGAAGLTIEDTLLPQAFGETQPQLISLAEGQGKINAALDARGDPSLVIIGRTGALAITSLDDAIERAQAYQAAGVDALFFTGVKTRPQLDAIAAATTLPIVLGGPSEAITDWDYLAERRVRIAVQGHAPIAAATRAVFETLQAVRNGAAPKQLSGLAAAELMQRVTRGDVVDERCDHFLGLKRS.

Ser47 provides a ligand contact to substrate. Asp85 is a Mg(2+) binding site. Arg156 and His232 together coordinate substrate.

This sequence belongs to the isocitrate lyase/PEP mutase superfamily. Oxaloacetate decarboxylase family. Homotetramer; dimer of dimers. Mg(2+) serves as cofactor.

It carries out the reaction oxaloacetate + H(+) = pyruvate + CO2. Its function is as follows. Catalyzes the decarboxylation of oxaloacetate into pyruvate. Seems to play a role in maintaining cellular concentrations of bicarbonate and pyruvate. In Rhodopseudomonas palustris (strain BisA53), this protein is Oxaloacetate decarboxylase.